The sequence spans 299 residues: Ribosomal protein L11 methyltransferase (299 aa).

Residues Thr140, Gly161, Asp183, and Asn232 each coordinate S-adenosyl-L-methionine.

The protein belongs to the methyltransferase superfamily. PrmA family.

It is found in the cytoplasm. It catalyses the reaction L-lysyl-[protein] + 3 S-adenosyl-L-methionine = N(6),N(6),N(6)-trimethyl-L-lysyl-[protein] + 3 S-adenosyl-L-homocysteine + 3 H(+). Its function is as follows. Methylates ribosomal protein L11. The polypeptide is Ribosomal protein L11 methyltransferase (Synechococcus elongatus (strain ATCC 33912 / PCC 7942 / FACHB-805) (Anacystis nidulans R2)).